Here is a 460-residue protein sequence, read N- to C-terminus: Serine incorporator 5 (460 aa).

The Extracellular portion of the chain corresponds to 1–36 (MCTPCCVSQLACCCGSAACSLCCGCCPKIKQSTSTR). Residues 37 to 57 (FMYALFFMLVTVTCVIMMSPT) form a helical membrane-spanning segment. Residues 58 to 89 (VEMAMREHIPFYSQMCQQLNAGENCSTLVGYS) are Cytoplasmic-facing. Residues 90 to 110 (AVYKVCFGMACFFFFFAVFTI) traverse the membrane as a helical segment. Residues 111–124 (RVQNSTGCRAAVHN) lie on the Extracellular side of the membrane. N-linked (GlcNAc...) asparagine glycosylation is present at asparagine 114. Residues 125–145 (GFWFFKFVALLACCAGGFFLP) traverse the membrane as a helical segment. Topologically, residues 146–156 (NQDQFLEVWRY) are cytoplasmic. Residues 157 to 177 (VGAAGGFLFIIIQLMLLVQFA) traverse the membrane as a helical segment. At 178-197 (HRWNQNWSSGATYNKLWYAA) the chain is on the extracellular side. N-linked (GlcNAc...) asparagine glycosylation is present at asparagine 183. A helical membrane pass occupies residues 198–218 (LALVTLVLFSVAVGGMVFMFM). The Cytoplasmic portion of the chain corresponds to 219-230 (YYTHPEACFLNK). Residues 231–251 (IFLGVNGGLCFIVSLLAISPC) traverse the membrane as a helical segment. Residues 252-259 (IQTFQPTS) lie on the Extracellular side of the membrane. A helical transmembrane segment spans residues 260–280 (GLLQPAVITLYVMYLTFSALA). At 281–311 (SKPIEMVEDEIKGNITVCVFPFKSGLKSDTN) the chain is on the cytoplasmic side. Residues 312–332 (IVTGVGTAILFCCILYSCLIS) form a helical membrane-spanning segment. Residues 333–391 (TTKRSSAALQVYRNDMPENERARCCFCWVDDTEDYDDEKTSGGQNVKYDERDGTVYSYC) lie on the Extracellular side of the membrane. A helical transmembrane segment spans residues 392–412 (FFHFVFFLGSLYVMMTVTNWF). The Cytoplasmic portion of the chain corresponds to 413 to 433 (HYDNAKIERLLEGSWSVFWIK). The helical transmembrane segment at 434–454 (MASSWVCLFFYMWTLVVPMLF) threads the bilayer. Residues 455-460 (PQRFQA) lie on the Extracellular side of the membrane.

This sequence belongs to the TDE1 family.

It localises to the cell membrane. The enzyme catalyses a 1,2-diacyl-sn-glycero-3-phospho-L-serine(in) = a 1,2-diacyl-sn-glycero-3-phospho-L-serine(out). The catalysed reaction is a 1,2-diacyl-sn-glycero-3-phosphocholine(in) = a 1,2-diacyl-sn-glycero-3-phosphocholine(out). It carries out the reaction a 1,2-diacyl-sn-glycero-3-phosphoethanolamine(in) = a 1,2-diacyl-sn-glycero-3-phosphoethanolamine(out). Functionally, restriction factor required to restrict infectivity of gammaretroviruses: acts by inhibiting an early step of viral infection. Impairs the penetration of the viral particle into the cytoplasm. Non-ATP-dependent, non-specific lipid transporter for phosphatidylserine, phosphatidylcholine, and phosphatidylethanolamine. Functions as a scramblase that flips lipids in both directions across the membrane. Phospholipid scrambling results in gammaretroviral surface exposure of phosphatidylserine and loss of membrane asymmetry, which leads to loss of infectivity. Enhances the incorporation of serine into phosphatidylserine and sphingolipids. This Danio rerio (Zebrafish) protein is Serine incorporator 5 (serinc5).